The following is a 140-amino-acid chain: MSDLPSSFDNGNSIDENEKSPGYYKILERCKEQPLVPLGCLATCGALILSARALRVGNKRQANRMFFARVAFQGLTVAALIGGAMYYGQDPKQKLEQKEREKMLARHREKLWIEELERRDLEVQERRKRAAAFRQQEEEK.

The region spanning 7-98 (SFDNGNSIDE…QDPKQKLEQK (92 aa)) is the HIG1 domain. A run of 2 helical transmembrane segments spans residues 35-54 (LVPL…ARAL) and 66-88 (FFAR…MYYG).

It belongs to the RCF1 family. In terms of assembly, associates with the respiratory chain complex III/complex IV supercomplex.

Its subcellular location is the mitochondrion membrane. Its function is as follows. Cytochrome c oxidase subunit which plays a role in assembly of respiratory supercomplexes. The sequence is that of Respiratory supercomplex factor 1, mitochondrial (RCF1) from Yarrowia lipolytica (strain CLIB 122 / E 150) (Yeast).